Consider the following 174-residue polypeptide: MSVDKKPRAAHDSHDLSELLVSVRRVSKVVKGGRRFSFSVLVVVGDEKGRVGCGMGKHAEVSEAKIKAVNAAKKSMIRVYLRESRTLHHDVEAKFCASRVVLRSARVGTGIIAGGSVRAVFEVLGVQDVVAKIIGSSNPHSVIYAVFAAFKNMLSPKQVAGKRSRKVGEVIENR.

Residues 16 to 79 enclose the S5 DRBM domain; the sequence is LSELLVSVRR…NAAKKSMIRV (64 aa).

Belongs to the universal ribosomal protein uS5 family. Part of the 30S ribosomal subunit. Contacts proteins S4 and S8.

Functionally, with S4 and S12 plays an important role in translational accuracy. In terms of biological role, located at the back of the 30S subunit body where it stabilizes the conformation of the head with respect to the body. In Anaplasma marginale (strain Florida), this protein is Small ribosomal subunit protein uS5.